Here is a 442-residue protein sequence, read N- to C-terminus: DMATS-type prenyltransferase mfmD (442 aa).

The protein belongs to the tryptophan dimethylallyltransferase family.

It functions in the pathway secondary metabolite biosynthesis; terpenoid biosynthesis. Functionally, prenyltransferase; part of the gene cluster that mediates the biosynthesis of the phthalide-terpenoid hybrid 11'-O-desmethylfendlerol. Within the pathway, mfmD is responsible for farnesylation of the cyclopolic acid intermediate via an O-prenylation reaction. The biosynthesis of 11'-O-desmethylfendlerol begins with the NR-PKS mfmB that forms 3,5-dimethylorsellinic acid (DMOA), which is then transformed into the phthalide 5,7-dihydroxy-4-(hydroxymethyl)-6-methylphthalide by the cytochrome P450 monooxygenase mfmA and the hydrolase mfmC. Subsequently, the methyltransferase mfmE catalyzes 7-O-methylation to yield 5-hydroxy-4-(hydroxymethyl)-7-methoxy-6-methylphthalide, which undergoes C-3 hydroxylation by the cytochrome P450 monooxygenase mfmF. The resultant cyclopolic acid (2,5-dihydroxy-4-(hydroxymethyl)-7-methoxy-6-methylphthalide) is then farnesylated by the DMATS-type prenyltransferase mfmD to afford 5-O-farnesylcyclopolic acid. Finally, the Pyr4-family terpene cyclase mfmH cyclizes the farnesyl moiety of 5-O-farnesylcyclopolic acid into a drimane-like structure, thus completing the biosynthesis of 11'-O-desmethylfendlerol. The chain is DMATS-type prenyltransferase mfmD from Annulohypoxylon moriforme (Filamentous fungus).